Here is a 695-residue protein sequence, read N- to C-terminus: Polyribonucleotide nucleotidyltransferase (695 aa).

Residues aspartate 486 and aspartate 492 each contribute to the Mg(2+) site. The KH domain maps to 553–612 (PRMIVFKINPEKIRDVIGKGGATIRALTEETGTTIDIVDDGTVKIFSADKADGQEAKRRV). The region spanning 622–690 (GKIYEGRVSR…KQGRVRLSVK (69 aa)) is the S1 motif domain.

The protein belongs to the polyribonucleotide nucleotidyltransferase family. Component of the RNA degradosome, which is a multiprotein complex involved in RNA processing and mRNA degradation. Mg(2+) is required as a cofactor.

The protein localises to the cytoplasm. It catalyses the reaction RNA(n+1) + phosphate = RNA(n) + a ribonucleoside 5'-diphosphate. Involved in mRNA degradation. Catalyzes the phosphorolysis of single-stranded polyribonucleotides processively in the 3'- to 5'-direction. The sequence is that of Polyribonucleotide nucleotidyltransferase from Nitrosococcus oceani (strain ATCC 19707 / BCRC 17464 / JCM 30415 / NCIMB 11848 / C-107).